A 308-amino-acid polypeptide reads, in one-letter code: Protein UL135 (308 aa).

Positions 1–22 are cleaved as a signal peptide; sequence MVWLWLGVGLLGGTGLASLVLA. The segment at 105–274 is disordered; the sequence is KPEFPPARFE…TEPTTLPIVS (170 aa). Over residues 126-145 the composition is skewed to low complexity; it reads SIGRSPSHCSSSSSLSSSAS. Composition is skewed to pro residues over residues 152 to 163 and 219 to 238; these read QPPPSWKPPPPP and PVTP…PRNP.

It belongs to the HCMV UL135 family. Interacts with host components of the WAVE2 complex ABI1, NAP1 and WAVE2. Also interacts with host ABI2 and TLN1.

Its subcellular location is the host cell membrane. It is found in the host Golgi apparatus. Functionally, remodels the host actin cytoskeleton in order to impair immune recognition of infected cells. Mechanistically, interacts with members of the host WAVE2 complex and redirects the complex to the plasma membrane. In turn, the efficiency of immune synapse formation is greatly reduced. The sequence is that of Protein UL135 (UL135) from Human cytomegalovirus (strain Merlin) (HHV-5).